Reading from the N-terminus, the 82-residue chain is U-scoloptoxin(21)-Sm3a (82 aa).

The N-terminal stretch at 1–21 (MKIIALLLMVFLDFIIVNXAE) is a signal peptide.

This sequence belongs to the scoloptoxin-21 family. As to expression, expressed by the venom gland.

It localises to the secreted. This is U-scoloptoxin(21)-Sm3a from Scolopendra morsitans (Tanzanian blue ringleg centipede).